Here is a 508-residue protein sequence, read N- to C-terminus: GMP synthase [glutamine-hydrolyzing] (508 aa).

One can recognise a Glutamine amidotransferase type-1 domain in the interval 1 to 189; it reads MILVLDFGSQ…ALLVCGCEKT (189 aa). Cys78 acts as the Nucleophile in catalysis. Catalysis depends on residues His163 and Glu165. The region spanning 190–383 is the GMPS ATP-PPase domain; that stretch reads WGMQHFAQRE…LGVSQDFLMR (194 aa). 217–223 is a binding site for ATP; sequence SGGVDST.

Homodimer.

It carries out the reaction XMP + L-glutamine + ATP + H2O = GMP + L-glutamate + AMP + diphosphate + 2 H(+). Its pathway is purine metabolism; GMP biosynthesis; GMP from XMP (L-Gln route): step 1/1. Functionally, catalyzes the synthesis of GMP from XMP. The protein is GMP synthase [glutamine-hydrolyzing] (guaA) of Helicobacter pylori (strain ATCC 700392 / 26695) (Campylobacter pylori).